Reading from the N-terminus, the 389-residue chain is Chalcone synthase 3 (389 aa).

C164 is an active-site residue.

Belongs to the thiolase-like superfamily. Chalcone/stilbene synthases family.

It carries out the reaction (E)-4-coumaroyl-CoA + 3 malonyl-CoA + 3 H(+) = 2',4,4',6'-tetrahydroxychalcone + 3 CO2 + 4 CoA. The protein operates within secondary metabolite biosynthesis; flavonoid biosynthesis. The primary product of this enzyme is 4,2',4',6'-tetrahydroxychalcone (also termed naringenin-chalcone or chalcone) which can under specific conditions spontaneously isomerize into naringenin. This chain is Chalcone synthase 3 (CHS3), found in Trifolium subterraneum (Subterranean clover).